A 182-amino-acid chain; its full sequence is WUSCHEL-related homeobox 5 (182 aa).

The interval 1–24 is disordered; the sequence is MSFSVKGRSLRGNNNGGTGTKCGR. Residues 20-84 constitute a DNA-binding region (homeobox; WUS-type); it reads TKCGRWNPTV…NHKARERQKR (65 aa).

It belongs to the WUS homeobox family. In terms of tissue distribution, specifically expressed in the central cells of a quiescent center (QC) of the root.

The protein resides in the nucleus. Its function is as follows. Transcription factor, which may be involved in the specification and maintenance of the stem cells (QC cells) in the root apical meristem (RAM). The sequence is that of WUSCHEL-related homeobox 5 (WOX5) from Arabidopsis thaliana (Mouse-ear cress).